Reading from the N-terminus, the 227-residue chain is PKHD-type hydroxylase Pden_4677 (227 aa).

A Fe2OG dioxygenase domain is found at 78-178 (HILPPMFNRY…RWASFFWAQS (101 aa)). Positions 96, 98, and 159 each coordinate Fe cation. Position 169 (arginine 169) interacts with 2-oxoglutarate.

It depends on Fe(2+) as a cofactor. L-ascorbate is required as a cofactor.

The chain is PKHD-type hydroxylase Pden_4677 from Paracoccus denitrificans (strain Pd 1222).